Here is a 507-residue protein sequence, read N- to C-terminus: Cobyric acid synthase (507 aa).

The GATase cobBQ-type domain occupies 259-456 (EIQIAVIKLP…LHGIFDNGTW (198 aa)). The active-site Nucleophile is cysteine 340. Residue histidine 448 is part of the active site.

Belongs to the CobB/CobQ family. CobQ subfamily.

The protein operates within cofactor biosynthesis; adenosylcobalamin biosynthesis. In terms of biological role, catalyzes amidations at positions B, D, E, and G on adenosylcobyrinic A,C-diamide. NH(2) groups are provided by glutamine, and one molecule of ATP is hydrogenolyzed for each amidation. This Prochlorococcus marinus (strain SARG / CCMP1375 / SS120) protein is Cobyric acid synthase.